A 79-amino-acid chain; its full sequence is DNA-directed RNA polymerase subunit omega (79 aa).

It belongs to the RNA polymerase subunit omega family. The RNAP catalytic core consists of 2 alpha, 1 beta, 1 beta' and 1 omega subunit. When a sigma factor is associated with the core the holoenzyme is formed, which can initiate transcription.

The enzyme catalyses RNA(n) + a ribonucleoside 5'-triphosphate = RNA(n+1) + diphosphate. Promotes RNA polymerase assembly. Latches the N- and C-terminal regions of the beta' subunit thereby facilitating its interaction with the beta and alpha subunits. In Kosmotoga olearia (strain ATCC BAA-1733 / DSM 21960 / TBF 19.5.1), this protein is DNA-directed RNA polymerase subunit omega.